A 237-amino-acid polypeptide reads, in one-letter code: Urease accessory protein UreF (237 aa).

The protein belongs to the UreF family. UreD, UreF and UreG form a complex that acts as a GTP-hydrolysis-dependent molecular chaperone, activating the urease apoprotein by helping to assemble the nickel containing metallocenter of UreC. The UreE protein probably delivers the nickel.

The protein resides in the cytoplasm. Functionally, required for maturation of urease via the functional incorporation of the urease nickel metallocenter. The chain is Urease accessory protein UreF from Streptococcus salivarius (strain 57.I).